A 566-amino-acid polypeptide reads, in one-letter code: MDEGGTPLLPDSLVYQIFLSLGPADVLAAGLVCRQWQAVSRDEFLWREQFYRYYQVARDVPRHPAAMSWYEEFQRLYDTVPCVEVQTLREHTDQVLHLSFSHSGYQFASCSKDCTVKIWSNDLTISLLHSADMRPYNWSYTQFSQFNKDDSLLLASGVFLGPHNSSSGEIAVISLDSFALLSRVRNKPYDVFGCWLTETSLISGNLHRIGDITSCSVLWLNNAFQDVESENVNVVKRLFKIQNLNASTVRTVMVADCSRFDSPDLLLEAGDPATSPCRIFDLGSDNEEVVAGPAPAHAKEGLRHFLDRVLEGRAQPQLSERMLETKVAELLAQGHTKPPERSATGAKSKYLIFTTGCLTYSPHQIGIKQILPHQMTTAGPVLGEGRGSDAFFDALDHVIDIHGHIIGMGLSPDNRYLYVNSRAWPNGAVVADPMQPPPIAEEIDLLVFDLKTMREVRRALRAHRAYTPNDECFFIFLDVSRDFVASGAEDRHGYIWDRHYNICLARLRHEDVVNSVVFSPQEQELLLTASDDATIKAWRSPRTMRVLQAPRPRPRTFFSWLASQRR.

The 47-residue stretch at 3–49 (EGGTPLLPDSLVYQIFLSLGPADVLAAGLVCRQWQAVSRDEFLWREQ) folds into the F-box domain. WD repeat units lie at residues 83–125 (VEVQ…DLTI), 126–178 (SLLH…LDSF), 179–238 (ALLS…VKRL), and 239–281 (FKIQ…RIFD). Residue Ser151 is modified to Phosphoserine; by PLK4. A Phosphoserine modification is found at Ser284. Residues 303-311 (RHFLDRVLE) carry the D-box motif. WD repeat units lie at residues 394–447 (ALDH…DLLV), 458–501 (RALR…RHYN), and 502–539 (ICLARLRHEDVVNSVVFSPQEQELLLTASDDATIKAWR).

It belongs to the FBXW5 family. As to quaternary structure, part of the SCF (SKP1-CUL1-F-box) E3 ubiquitin-protein ligase complex SCF(FBXW5) composed of CUL1, SKP1, RBX1 and FBXW5. Component of the DCX(FBXW5) E3 ubiquitin ligase complex, at least composed of (CUL4A or CUL4B), DDB1, FBXW5 and RBX1. Interacts with CDC20, EPS8, TSC1, TSC2 and SASS6. Interacts with TNFAIP8L1; TNFAIP8L1 competes with TSC2 to bind FBXW5 increasing TSC2 stability by preventing its ubiquitination. In terms of processing, phosphorylated at Ser-151 by PLK4 during the G1/S transition, leading to inhibit its ability to ubiquitinate SASS6. Post-translationally, ubiquitinated and degraded by the APC/C complex during mitosis and G1 phase.

It localises to the cytoplasm. It participates in protein modification; protein ubiquitination. Substrate recognition component of both SCF (SKP1-CUL1-F-box protein) and DCX (DDB1-CUL4-X-box) E3 ubiquitin-protein ligase complexes. Substrate recognition component of the SCF(FBXW5) E3 ubiquitin-protein ligase complex which mediates the ubiquitination and subsequent proteasomal degradation of SASS6 during S phase, leading to prevent centriole reduplication. The SCF(FBXW5) complex also mediates ubiquitination and degradation of actin-regulator EPS8 during G2 phase, leading to the transient degradation of EPS8 and subsequent cell shape changes required to allow mitotic progression. Substrate-specific adapter of the DCX(FBXW5) E3 ubiquitin-protein ligase complex which mediates the polyubiquitination and subsequent degradation of TSC2. May also act as a negative regulator of MAP3K7/TAK1 signaling in the interleukin-1B (IL1B) signaling pathway. This Homo sapiens (Human) protein is F-box/WD repeat-containing protein 5 (FBXW5).